The primary structure comprises 147 residues: Transthyretin (147 aa).

Residues 1 to 20 (MASFRLFLLCLAGLVFVSEA) form the signal peptide. At cysteine 30 the chain carries Sulfocysteine. Lysine 35 contacts L-thyroxine. Position 62 is a 4-carboxyglutamate (glutamate 62). Serine 72 is modified (phosphoserine). Residue glutamate 74 coordinates L-thyroxine. An N-linked (GlcNAc...) asparagine glycan is attached at asparagine 118. Serine 137 is an L-thyroxine binding site.

The protein belongs to the transthyretin family. Homotetramer. Dimer of dimers. In the homotetramer, subunits assemble around a central channel that can accommodate two ligand molecules. Interacts with RBP4. Post-translationally, sulfonation of the reactive cysteine Cys-30 enhances the stability of the native conformation of TTR, avoiding misassembly of the protein leading to amyloid formation. Detected in serum (at protein level).

Its subcellular location is the secreted. Its function is as follows. Thyroid hormone-binding protein. Probably transports thyroxine from the bloodstream to the brain. This Bos taurus (Bovine) protein is Transthyretin (TTR).